Consider the following 962-residue polypeptide: Glycine dehydrogenase (decarboxylating) (962 aa).

Lys-709 is modified (N6-(pyridoxal phosphate)lysine).

It belongs to the GcvP family. In terms of assembly, the glycine cleavage system is composed of four proteins: P, T, L and H. It depends on pyridoxal 5'-phosphate as a cofactor.

It catalyses the reaction N(6)-[(R)-lipoyl]-L-lysyl-[glycine-cleavage complex H protein] + glycine + H(+) = N(6)-[(R)-S(8)-aminomethyldihydrolipoyl]-L-lysyl-[glycine-cleavage complex H protein] + CO2. The glycine cleavage system catalyzes the degradation of glycine. The P protein binds the alpha-amino group of glycine through its pyridoxal phosphate cofactor; CO(2) is released and the remaining methylamine moiety is then transferred to the lipoamide cofactor of the H protein. This is Glycine dehydrogenase (decarboxylating) from Shewanella baltica (strain OS195).